A 180-amino-acid chain; its full sequence is Probable chorismate pyruvate-lyase (180 aa).

Substrate is bound by residues arginine 76, leucine 113, and glutamate 171.

This sequence belongs to the UbiC family.

It localises to the cytoplasm. The enzyme catalyses chorismate = 4-hydroxybenzoate + pyruvate. The protein operates within cofactor biosynthesis; ubiquinone biosynthesis. Its function is as follows. Removes the pyruvyl group from chorismate, with concomitant aromatization of the ring, to provide 4-hydroxybenzoate (4HB) for the ubiquinone pathway. This chain is Probable chorismate pyruvate-lyase, found in Pseudoalteromonas translucida (strain TAC 125).